The chain runs to 272 residues: tRNA pseudouridine synthase A (272 aa).

The Nucleophile role is filled by aspartate 51. Tyrosine 109 contacts substrate.

This sequence belongs to the tRNA pseudouridine synthase TruA family. As to quaternary structure, homodimer.

The catalysed reaction is uridine(38/39/40) in tRNA = pseudouridine(38/39/40) in tRNA. Formation of pseudouridine at positions 38, 39 and 40 in the anticodon stem and loop of transfer RNAs. The chain is tRNA pseudouridine synthase A from Verminephrobacter eiseniae (strain EF01-2).